Here is a 203-residue protein sequence, read N- to C-terminus: tRNA (guanine-N(7)-)-methyltransferase (203 aa).

S-adenosyl-L-methionine-binding residues include E34, E59, D86, and D107. D107 is an active-site residue. Substrate is bound by residues K111, D143, and T181–E184.

The protein belongs to the class I-like SAM-binding methyltransferase superfamily. TrmB family.

It catalyses the reaction guanosine(46) in tRNA + S-adenosyl-L-methionine = N(7)-methylguanosine(46) in tRNA + S-adenosyl-L-homocysteine. The protein operates within tRNA modification; N(7)-methylguanine-tRNA biosynthesis. In terms of biological role, catalyzes the formation of N(7)-methylguanine at position 46 (m7G46) in tRNA. In Mycoplasmopsis pulmonis (strain UAB CTIP) (Mycoplasma pulmonis), this protein is tRNA (guanine-N(7)-)-methyltransferase.